Consider the following 341-residue polypeptide: Inactive caspase-12 (341 aa).

One can recognise a CARD domain in the interval 1–92; that stretch reads MADEKPSNGV…QLSSDISSDG (92 aa). Phosphoserine occurs at positions 85 and 90. Active-site residues include His172 and Cys220.

The protein belongs to the peptidase C14A family. As to expression, widely expressed, with highest levels in lung.

Its function is as follows. May function as a negative regulator of inflammatory responses and innate immunity. May reduce cytokine release in response to bacterial lipopolysaccharide during infection. Reduces activation of NF-kappa-B in response to TNF. May lack protease activity. The sequence is that of Inactive caspase-12 (CASP12) from Homo sapiens (Human).